The following is a 346-amino-acid chain: Formimidoylglutamase (346 aa).

The Mn(2+) site is built by histidine 145, aspartate 180, histidine 182, aspartate 184, aspartate 271, and aspartate 273.

This sequence belongs to the arginase family. It depends on Mn(2+) as a cofactor.

The enzyme catalyses N-formimidoyl-L-glutamate + H2O = formamide + L-glutamate. It functions in the pathway amino-acid degradation; L-histidine degradation into L-glutamate; L-glutamate from N-formimidoyl-L-glutamate (hydrolase route): step 1/1. Catalyzes the conversion of N-formimidoyl-L-glutamate to L-glutamate and formamide. This chain is Formimidoylglutamase, found in Psychrobacter cryohalolentis (strain ATCC BAA-1226 / DSM 17306 / VKM B-2378 / K5).